We begin with the raw amino-acid sequence, 187 residues long: NADH-quinone oxidoreductase subunit B (187 aa).

[4Fe-4S] cluster-binding residues include C46, C47, C112, and C141.

Belongs to the complex I 20 kDa subunit family. NDH-1 is composed of 14 different subunits. Subunits NuoB, C, D, E, F, and G constitute the peripheral sector of the complex. Requires [4Fe-4S] cluster as cofactor.

The protein resides in the cell inner membrane. It catalyses the reaction a quinone + NADH + 5 H(+)(in) = a quinol + NAD(+) + 4 H(+)(out). Its function is as follows. NDH-1 shuttles electrons from NADH, via FMN and iron-sulfur (Fe-S) centers, to quinones in the respiratory chain. The immediate electron acceptor for the enzyme in this species is believed to be ubiquinone. Couples the redox reaction to proton translocation (for every two electrons transferred, four hydrogen ions are translocated across the cytoplasmic membrane), and thus conserves the redox energy in a proton gradient. The chain is NADH-quinone oxidoreductase subunit B from Myxococcus xanthus (strain DK1622).